Here is a 457-residue protein sequence, read N- to C-terminus: Cysteine--tRNA ligase (457 aa).

Cys-28 is a binding site for Zn(2+). The short motif at 30–40 is the 'HIGH' region element; that stretch reads ITVYDLCHIGH. Positions 209, 234, and 238 each coordinate Zn(2+). Positions 266–270 match the 'KMSKS' region motif; that stretch reads KMSKS. An ATP-binding site is contributed by Lys-269.

Belongs to the class-I aminoacyl-tRNA synthetase family. Monomer. It depends on Zn(2+) as a cofactor.

The protein resides in the cytoplasm. The enzyme catalyses tRNA(Cys) + L-cysteine + ATP = L-cysteinyl-tRNA(Cys) + AMP + diphosphate. The protein is Cysteine--tRNA ligase of Sodalis glossinidius (strain morsitans).